The sequence spans 309 residues: Protoheme IX farnesyltransferase 2 (309 aa).

8 helical membrane-spanning segments follow: residues Phe35 to Val55, Met59 to Ile79, Ala107 to Trp127, Leu131 to Leu151, Ile159 to Gly179, Trp186 to Ala206, Leu238 to Ile258, and Phe289 to Leu309.

This sequence belongs to the UbiA prenyltransferase family. Protoheme IX farnesyltransferase subfamily.

It localises to the cell inner membrane. It carries out the reaction heme b + (2E,6E)-farnesyl diphosphate + H2O = Fe(II)-heme o + diphosphate. The protein operates within porphyrin-containing compound metabolism; heme O biosynthesis; heme O from protoheme: step 1/1. Functionally, converts heme B (protoheme IX) to heme O by substitution of the vinyl group on carbon 2 of heme B porphyrin ring with a hydroxyethyl farnesyl side group. This chain is Protoheme IX farnesyltransferase 2, found in Pseudoalteromonas translucida (strain TAC 125).